The sequence spans 679 residues: Enzymatic polyprotein (679 aa).

Residues 40 to 130 form a protease region; sequence LHCFVDTGAS…LYEPFIQFTD (91 aa). Residue aspartate 45 is part of the active site. Positions 272-452 constitute a Reverse transcriptase domain; sequence LKVIKPSKSP…KKINFLGLEI (181 aa).

It belongs to the caulimoviridae enzymatic polyprotein family.

It carries out the reaction DNA(n) + a 2'-deoxyribonucleoside 5'-triphosphate = DNA(n+1) + diphosphate. Its function is as follows. Encodes for at least two polypeptides: protease (PR) and reverse transcriptase (RT). The protease processes the polyprotein in cis. Reverse transcriptase is multifunctional enzyme that converts the viral RNA genome into dsDNA in viral cytoplasmic capsids. This enzyme displays a DNA polymerase activity that can copy either DNA or RNA templates, and a ribonuclease H (RNase H) activity that cleaves the RNA strand of RNA-DNA heteroduplexes in a partially processive 3'- to 5'-endonucleasic mode. Neo-synthesized pregenomic RNA (pgRNA) are encapsidated, and reverse-transcribed inside the nucleocapsid. Partial (+)DNA is synthesized from the (-)DNA template and generates the relaxed circular DNA (RC-DNA) genome. After budding and infection, the RC-DNA migrates in the nucleus, and is converted into a plasmid-like covalently closed circular DNA (cccDNA). The sequence is that of Enzymatic polyprotein from Cauliflower mosaic virus (strain CM-1841) (CaMV).